The primary structure comprises 81 residues: Arminin 2a (81 aa).

The signal sequence occupies residues 1–18 (MKTVFAILFLAFIALTYA). The propeptide occupies 19–57 (RSYEDVKEEIKNEVVKEILEDLEEESDELDDKSKEINDA). Residue alanine 78 is modified to Alanine amide.

It belongs to the arminin family. In terms of tissue distribution, expressed in entodermal epithelium along the body column.

Its subcellular location is the secreted. It is found in the target cell membrane. Functionally, antimicrobial peptide with a broad-spectrum antimicrobial activity. Keeps its antibacterial activity under a wide range of salt concentrations that mimic physiological conditions of human blood, which is surprising, since Hydra is an obligate freshwater animal with nearly no salt tolerance. Does not affect red blood cells. This is Arminin 2a from Hydra vulgaris (Hydra).